The primary structure comprises 307 residues: Malate dehydrogenase (307 aa).

NAD(+)-binding positions include 8 to 13 and Asp-32; that span reads GAGNVG. Substrate is bound by residues Arg-81 and Arg-87. NAD(+) is bound by residues Asn-94 and 117–119; that span reads VSN. Substrate is bound by residues Asn-119 and Arg-150. The active-site Proton acceptor is the His-174.

This sequence belongs to the LDH/MDH superfamily. MDH type 3 family.

It carries out the reaction (S)-malate + NAD(+) = oxaloacetate + NADH + H(+). Its function is as follows. Catalyzes the reversible oxidation of malate to oxaloacetate. This is Malate dehydrogenase from Dehalococcoides mccartyi (strain ATCC BAA-2100 / JCM 16839 / KCTC 5957 / BAV1).